Here is a 320-residue protein sequence, read N- to C-terminus: Ribosomal RNA small subunit methyltransferase H (320 aa).

S-adenosyl-L-methionine-binding positions include 42–44 (GGH), D62, F86, D108, and Q115.

Belongs to the methyltransferase superfamily. RsmH family.

Its subcellular location is the cytoplasm. The catalysed reaction is cytidine(1402) in 16S rRNA + S-adenosyl-L-methionine = N(4)-methylcytidine(1402) in 16S rRNA + S-adenosyl-L-homocysteine + H(+). Functionally, specifically methylates the N4 position of cytidine in position 1402 (C1402) of 16S rRNA. The protein is Ribosomal RNA small subunit methyltransferase H of Yersinia enterocolitica serotype O:8 / biotype 1B (strain NCTC 13174 / 8081).